A 189-amino-acid chain; its full sequence is Interferon alpha-10 (189 aa).

The N-terminal stretch at 1-23 is a signal peptide; that stretch reads MALSFSLLMAVLVLSYKSICSLG. 2 disulfide bridges follow: cysteine 24–cysteine 122 and cysteine 52–cysteine 162.

The protein belongs to the alpha/beta interferon family.

Its subcellular location is the secreted. Functionally, produced by macrophages, IFN-alpha have antiviral activities. Interferon stimulates the production of two enzymes: a protein kinase and an oligoadenylate synthetase. This chain is Interferon alpha-10 (IFNA10), found in Homo sapiens (Human).